The primary structure comprises 464 residues: Soluble pyridine nucleotide transhydrogenase (464 aa).

An FAD-binding site is contributed by 35-44 (DSRRVVGGNC).

Belongs to the class-I pyridine nucleotide-disulfide oxidoreductase family. FAD is required as a cofactor.

It localises to the cytoplasm. The catalysed reaction is NAD(+) + NADPH = NADH + NADP(+). Its function is as follows. Conversion of NADPH, generated by peripheral catabolic pathways, to NADH, which can enter the respiratory chain for energy generation. This chain is Soluble pyridine nucleotide transhydrogenase, found in Pseudomonas paraeruginosa (strain DSM 24068 / PA7) (Pseudomonas aeruginosa (strain PA7)).